A 73-amino-acid polypeptide reads, in one-letter code: Putative beta-defensin 108A (73 aa).

Residues 1-22 form the signal peptide; the sequence is MRIAVLFFTIFFFMSQVLPAKG. Intrachain disulfides connect C28-C55, C35-C49, and C39-C56.

It belongs to the beta-defensin family.

It localises to the secreted. Its function is as follows. Has antibacterial activity. The protein is Putative beta-defensin 108A of Homo sapiens (Human).